The chain runs to 740 residues: ATP-dependent RNA helicase DDX1 (740 aa).

Residues 1-295 (MAAFSEMGVM…APKALIVEPS (295 aa)) are necessary for interaction with HNRNPK. The interaction with dsRNA stretch occupies residues 1 to 448 (MAAFSEMGVM…DTVHHVVVPV (448 aa)). Positions 1-525 (MAAFSEMGVM…KIDCDNLEQY (525 aa)) are necessary for interaction with RELA. The 427-residue stretch at 2–428 (AAFSEMGVMP…SEKIMHFPTW (427 aa)) folds into the Helicase ATP-binding domain. 46-53 (AETGSGKT) is an ATP binding site. The B30.2/SPRY domain maps to 70-247 (DQQEGKKGKA…LKFNFGEEEF (178 aa)). 2 positions are modified to N6-acetyllysine: lysine 239 and lysine 268. Lysine 281 is subject to N6-acetyllysine; alternate. A Glycyl lysine isopeptide (Lys-Gly) (interchain with G-Cter in SUMO2); alternate cross-link involves residue lysine 281. The short motif at 370-373 (DEAD) is the DEAD box element. The residue at position 481 (serine 481) is a Phosphoserine. One can recognise a Helicase C-terminal domain in the interval 493-681 (KGEYAVRAIK…QVEPDIKVPV (189 aa)). The necessary for interaction with HNRNPK stretch occupies residues 525–740 (YFMQQGGGPD…YLPNQLFRTF (216 aa)).

It belongs to the DEAD box helicase family. DDX1 subfamily. Found in a multi-helicase-TICAM1 complex at least composed of DHX36, DDX1, DDX21 and TICAM1; this complex exists in resting cells with or without poly(I:C) RNA ligand stimulation. Interacts with DHX36. Interacts (via B30.2/SPRY domain) with DDX21 (via N-terminus); this interaction serves as bridges to TICAM1. Interacts with FAM98A (via N- and C-terminus). Interacts with PHF5A (via C-terminus). Interacts with MBNL1. Interacts with CSTF2. Interacts with HNRNPK. Interacts with ATM. Interacts with RELA (via C-terminus). Component of the tRNA-splicing ligase complex. Interacts with PQBP1. Interacts with ERCC6. Phosphorylated by ATM kinase; phosphorylation is increased in response to ionizing radiation (IR).

The protein localises to the nucleus. It is found in the cytoplasm. Its subcellular location is the cytoplasmic granule. It localises to the cytosol. The protein resides in the mitochondrion. It carries out the reaction ATP + H2O = ADP + phosphate + H(+). In terms of biological role, acts as an ATP-dependent RNA helicase, able to unwind both RNA-RNA and RNA-DNA duplexes. Possesses 5' single-stranded RNA overhang nuclease activity. Possesses ATPase activity on various RNA, but not DNA polynucleotides. May play a role in RNA clearance at DNA double-strand breaks (DSBs), thereby facilitating the template-guided repair of transcriptionally active regions of the genome. Together with RELA, acts as a coactivator to enhance NF-kappa-B-mediated transcriptional activation. Acts as a positive transcriptional regulator of cyclin CCND2 expression. Binds to the cyclin CCND2 promoter region. Associates with chromatin at the NF-kappa-B promoter region via association with RELA. Binds to poly(A) RNA. May be involved in 3'-end cleavage and polyadenylation of pre-mRNAs. Component of the tRNA-splicing ligase complex required to facilitate the enzymatic turnover of catalytic subunit RTCB: together with archease (ZBTB8OS), acts by facilitating the guanylylation of RTCB, a key intermediate step in tRNA ligation. Component of a multi-helicase-TICAM1 complex that acts as a cytoplasmic sensor of viral double-stranded RNA (dsRNA) and plays a role in the activation of a cascade of antiviral responses including the induction of pro-inflammatory cytokines via the adapter molecule TICAM1. Specifically binds (via helicase ATP-binding domain) on both short and long poly(I:C) dsRNA. The protein is ATP-dependent RNA helicase DDX1 (Ddx1) of Rattus norvegicus (Rat).